The sequence spans 1580 residues: Transcriptional activator GLI3 (1580 aa).

Position 1 is an N-acetylmethionine (methionine 1). 2 stretches are compositionally biased toward polar residues: residues 1-10 and 58-78; these read MEAQSHSSTT and ITMQ…PSTS. Positions 1–79 are disordered; the sequence is MEAQSHSSTT…KVSEEPSTSS (79 aa). Arginine 175 carries the post-translational modification Omega-N-methylarginine. Residues 368 to 475 form a disordered region; it reads QSLGSAFGHS…DKDESKQEPE (108 aa). Over residues 401–427 the composition is skewed to polar residues; that stretch reads NPVQVSSGPSESSQNKPTSESAVSSTG. Glycyl lysine isopeptide (Lys-Gly) (interchain with G-Cter in SUMO2) cross-links involve residues lysine 438 and lysine 462. The segment covering 461-474 has biased composition (basic and acidic residues); sequence VKEEGDKDESKQEP. 5 consecutive C2H2-type zinc fingers follow at residues 480–505, 513–540, 546–570, 576–601, and 607–632; these read TNCH…NNDH, FVCR…MRRH, HKCT…LRSH, YVCE…NRTH, and YVCK…KTVH. Residues 620-728 form a disordered region; that stretch reads DPSSLRKHVK…PISNYSNSGL (109 aa). Residues 632–648 are compositionally biased toward basic and acidic residues; that stretch reads HGPEAHVTKKQRGDIHP. The residue at position 664 (serine 664) is a Phosphoserine. Over residues 684–699 the composition is skewed to basic and acidic residues; that stretch reads SKREECLQVKTVKAEK. Low complexity predominate over residues 703-726; the sequence is SQPSPGGQSSCSSQQSPISNYSNS. The tract at residues 745–845 is mediates interaction with DZIP1; the sequence is DETPIMDSTI…VDVTMLNMLN (101 aa). Residue lysine 773 forms a Glycyl lysine isopeptide (Lys-Gly) (interchain with G-Cter in ubiquitin) linkage. A Glycyl lysine isopeptide (Lys-Gly) (interchain with G-Cter in SUMO2); alternate cross-link involves residue lysine 779. Lysine 779 participates in a covalent cross-link: Glycyl lysine isopeptide (Lys-Gly) (interchain with G-Cter in ubiquitin); alternate. Glycyl lysine isopeptide (Lys-Gly) (interchain with G-Cter in ubiquitin) cross-links involve residues lysine 784 and lysine 800. A phosphoserine; by PKA mark is found at serine 849, serine 865, serine 877, and serine 907. Positions 863–882 are enriched in low complexity; sequence RSSGISPCFSSRRSSEASQA. The interval 863–918 is disordered; sequence RSSGISPCFSSRRSSEASQAEGRPQNVSVADSYDPISTDASRRSSEASQSDGLPSL. A compositionally biased stretch (polar residues) spans 908-918; the sequence is EASQSDGLPSL. Serine 980 and serine 1006 each carry phosphoserine; by PKA. The disordered stretch occupies residues 981–1042; that stretch reads DGGAHGYGRR…PAMATSAEKR (62 aa).

This sequence belongs to the GLI C2H2-type zinc-finger protein family. In terms of assembly, the full-length GLI3 form (GLI3FL) interacts with SUFU and this interaction regulates the formation of either repressor or activator forms of GLI3. Its association with SUFU is regulated by Hh signaling and dissociation of the SUFU-GLI3 interaction requires the presence of the ciliary motor KIF3A. Interacts with KIF7. The activator form of GLI3 (GLI3A) but not the repressor form (GLI3R) can interact with TRPS1. The phosphorylated form interacts with BTRC. Interacts with ZIC1. Interacts with ZIC3 (via C2H2-type domains 3, 4 and 5); the interaction enhances its transcriptional activity. Interacts with WRD11; the interaction associates EMX1 with GLI3. Interacts with DZIP1; retains GLI3 within the cytoplasm. Phosphorylated on multiple sites by protein kinase A (PKA) and phosphorylation by PKA primes further phosphorylation by CK1 and GSK3. Phosphorylated by DYRK2 (in vitro). Phosphorylation is essential for its proteolytic processing. Post-translationally, transcriptional repressor GLI3R, a C-terminally truncated form, is generated from the full-length GLI3 protein (GLI3FL/GLI3-190) through proteolytic processing. This process requires PKA-primed phosphorylation of GLI3, ubiquitination of GLI3 and the presence of BTRC. GLI3FL is complexed with SUFU in the cytoplasm and is maintained in a neutral state. Without the Hh signal, the SUFU-GLI3 complex is recruited to cilia, leading to the efficient processing of GLI3FL into GLI3R. GLI3R formation leads to its dissociation from SUFU, allowing it to translocate into the nucleus, and repress Hh target genes. When Hh signaling is initiated, SUFU dissociates from GLI3FL and this has two consequences. First, GLI3R production is halted. Second, free GLI3FL translocates to the nucleus, where it is phosphorylated, destabilized, and converted to a transcriptional activator (GLI3A). Phosphorylated in vitro by ULK3.

It is found in the nucleus. Its subcellular location is the cytoplasm. It localises to the cell projection. The protein localises to the cilium. Its function is as follows. Has a dual function as a transcriptional activator and a repressor of the sonic hedgehog (Shh) pathway, and plays a role in limb development. The full-length GLI3 form (GLI3FL) after phosphorylation and nuclear translocation, acts as an activator (GLI3A) while GLI3R, its C-terminally truncated form, acts as a repressor. A proper balance between the GLI3 activator and the repressor GLI3R, rather than the repressor gradient itself or the activator/repressor ratio gradient, specifies limb digit number and identity. In concert with TRPS1, plays a role in regulating the size of the zone of distal chondrocytes, in restricting the zone of PTHLH expression in distal cells and in activating chondrocyte proliferation. Binds to the minimal GLI-consensus sequence 5'-GGGTGGTC-3'. Plays a role in limb and brain development. The sequence is that of Transcriptional activator GLI3 (GLI3) from Pan troglodytes (Chimpanzee).